The primary structure comprises 142 residues: Large ribosomal subunit protein uL13 (142 aa).

It belongs to the universal ribosomal protein uL13 family. Part of the 50S ribosomal subunit.

Its function is as follows. This protein is one of the early assembly proteins of the 50S ribosomal subunit, although it is not seen to bind rRNA by itself. It is important during the early stages of 50S assembly. The protein is Large ribosomal subunit protein uL13 of Burkholderia pseudomallei (strain 1106a).